The primary structure comprises 486 residues: LON peptidase N-terminal domain and RING finger protein C14F5.10c (486 aa).

Residues 169–207 form an RING-type zinc finger; the sequence is CQICFGMLYDPVVSPCGHTFCGPCLMQALTQSPQCPTCR. One can recognise a Lon N-terminal domain in the interval 250-472; that stretch reads ESWLPLFISM…LVLIWLTQLQ (223 aa).

The sequence is that of LON peptidase N-terminal domain and RING finger protein C14F5.10c from Schizosaccharomyces pombe (strain 972 / ATCC 24843) (Fission yeast).